The following is a 127-amino-acid chain: Histidine-containing phosphotransfer protein 4 (127 aa).

Residues 27-122 (NPNFVEEVSA…STLRKKLEHY (96 aa)) form the HPt domain. Histidine 68 carries the post-translational modification Phosphohistidine.

As to quaternary structure, interacts with the B-type response regulators ARR1 and ARR2. In terms of processing, two-component system major event consists of a His-to-Asp phosphorelay between a sensor histidine kinase (HK) and a response regulator (RR). In plants, the His-to-Asp phosphorelay involves an additional intermediate named Histidine-containing phosphotransfer protein (HPt). This multistep phosphorelay consists of a His-Asp-His-Asp sequential transfer of a phosphate group between first a His and an Asp of the HK protein, followed by the transfer to a conserved His of the HPt protein and finally the transfer to an Asp in the receiver domain of the RR protein. Predominantly expressed in aerial parts of the plant.

It localises to the cytoplasm. It is found in the cytosol. The protein resides in the nucleus. Functions as a two-component phosphorelay mediator between cytokinin sensor histidine kinases and response regulators (B-type ARRs). Plays an important role in propagating cytokinin signal transduction through the multistep His-to-Asp phosphorelay. The protein is Histidine-containing phosphotransfer protein 4 (AHP4) of Arabidopsis thaliana (Mouse-ear cress).